Here is a 364-residue protein sequence, read N- to C-terminus: Aminomethyltransferase (364 aa).

The protein belongs to the GcvT family. As to quaternary structure, the glycine cleavage system is composed of four proteins: P, T, L and H.

It catalyses the reaction N(6)-[(R)-S(8)-aminomethyldihydrolipoyl]-L-lysyl-[protein] + (6S)-5,6,7,8-tetrahydrofolate = N(6)-[(R)-dihydrolipoyl]-L-lysyl-[protein] + (6R)-5,10-methylene-5,6,7,8-tetrahydrofolate + NH4(+). The glycine cleavage system catalyzes the degradation of glycine. In Photorhabdus laumondii subsp. laumondii (strain DSM 15139 / CIP 105565 / TT01) (Photorhabdus luminescens subsp. laumondii), this protein is Aminomethyltransferase.